The following is a 308-amino-acid chain: Aspartate carbamoyltransferase catalytic subunit (308 aa).

2 residues coordinate carbamoyl phosphate: R59 and T60. L-aspartate is bound at residue K87. The carbamoyl phosphate site is built by R109, H139, and Q142. Residues R172 and R224 each contribute to the L-aspartate site. 2 residues coordinate carbamoyl phosphate: A265 and P266.

Belongs to the aspartate/ornithine carbamoyltransferase superfamily. ATCase family. As to quaternary structure, heterododecamer (2C3:3R2) of six catalytic PyrB chains organized as two trimers (C3), and six regulatory PyrI chains organized as three dimers (R2).

It catalyses the reaction carbamoyl phosphate + L-aspartate = N-carbamoyl-L-aspartate + phosphate + H(+). It participates in pyrimidine metabolism; UMP biosynthesis via de novo pathway; (S)-dihydroorotate from bicarbonate: step 2/3. Catalyzes the condensation of carbamoyl phosphate and aspartate to form carbamoyl aspartate and inorganic phosphate, the committed step in the de novo pyrimidine nucleotide biosynthesis pathway. This is Aspartate carbamoyltransferase catalytic subunit from Enterococcus faecalis (strain ATCC 700802 / V583).